A 564-amino-acid chain; its full sequence is H/ACA ribonucleoprotein complex non-core subunit NAF1 (564 aa).

5 disordered regions span residues Met-1–Lys-29, Leu-108–Gly-218, Asp-238–Gly-264, Ala-387–Tyr-489, and Pro-538–Ser-564. The span at Ala-146 to Ser-157 shows a compositional bias: low complexity. The segment covering Asp-238–Ala-249 has biased composition (acidic residues). Thr-250 bears the Phosphothreonine mark. Ser-254 carries the phosphoserine modification. The segment covering Ser-388–His-402 has biased composition (basic and acidic residues). At Ser-403 the chain carries Phosphoserine. A compositionally biased stretch (low complexity) spans Ser-426 to Val-446. Thr-427 is modified (phosphothreonine). At Ser-429 the chain carries Phosphoserine. At Thr-432 the chain carries Phosphothreonine. Residues Pro-468–Tyr-489 show a composition bias toward polar residues. Over residues Pro-538 to Asn-553 the composition is skewed to pro residues. Residues Asn-554–Ser-564 show a composition bias toward polar residues.

This sequence belongs to the NAF1 family. During assembly of the complex, component of the box H/ACA small nucleolar ribonucleoprotein (H/ACA snoRNP) complex.

It is found in the nucleus. Functionally, RNA-binding protein required for the maturation of the box H/ACA small nucleolar ribonucleoprotein (H/ACA snoRNP) complex and ribosome biogenesis. During assembly of the H/ACA snoRNP complex it associates with the complex and dissociates during complex maturation, becoming replaced by Gar1 to yield mature H/ACA snoRNP complex. The chain is H/ACA ribonucleoprotein complex non-core subunit NAF1 from Drosophila melanogaster (Fruit fly).